A 222-amino-acid chain; its full sequence is Superoxide dismutase [Cu-Zn], chloroplastic (222 aa).

Residues 1-68 (MAAHTILASA…AASKPLTIVA (68 aa)) constitute a chloroplast transit peptide. Positions 114, 116, and 131 each coordinate Cu cation. Cys-125 and Cys-214 are oxidised to a cystine. Zn(2+)-binding residues include His-131, His-139, His-148, and Asp-151. Residue His-188 coordinates Cu cation.

The protein belongs to the Cu-Zn superoxide dismutase family. Homotetramer. The cofactor is Cu cation. Zn(2+) is required as a cofactor.

It localises to the plastid. The protein localises to the chloroplast. It carries out the reaction 2 superoxide + 2 H(+) = H2O2 + O2. Destroys radicals which are normally produced within the cells and which are toxic to biological systems. This Spinacia oleracea (Spinach) protein is Superoxide dismutase [Cu-Zn], chloroplastic (SODCP).